Here is a 259-residue protein sequence, read N- to C-terminus: Hemin import ATP-binding protein HmuV (259 aa).

Positions Ile-8–Lys-242 constitute an ABC transporter domain. Gly-40–Ser-47 contacts ATP.

This sequence belongs to the ABC transporter superfamily. Heme (hemin) importer (TC 3.A.1.14.5) family. As to quaternary structure, the complex is composed of two ATP-binding proteins (HmuV), two transmembrane proteins (HmuU) and a solute-binding protein (HmuT).

The protein localises to the cell inner membrane. Its function is as follows. Part of the ABC transporter complex HmuTUV involved in hemin import. Responsible for energy coupling to the transport system. The chain is Hemin import ATP-binding protein HmuV from Aliivibrio fischeri (strain ATCC 700601 / ES114) (Vibrio fischeri).